The chain runs to 679 residues: Cysteine-rich receptor-like protein kinase 29 (679 aa).

The first 23 residues, 1 to 23 (MEHVRVIFFFACFLTLAPFHAFA), serve as a signal peptide directing secretion. Over 24–286 (QVDSYEFDPD…RTGKGKGGSK (263 aa)) the chain is Extracellular. 2 Gnk2-homologous domains span residues 30-134 (FDPD…NRTI) and 140-249 (TNPT…TWRF). Asn-41, Asn-45, Asn-71, Asn-107, Asn-131, and Asn-187 each carry an N-linked (GlcNAc...) asparagine glycan. The segment at 260–281 (PPAIQPADSPQSAARTERTGKG) is disordered. A helical membrane pass occupies residues 287-307 (VIIAIVIPILLVALLAICLCL). Residues 308–679 (VLKWRKNKSG…DVTVSEFSPR (372 aa)) are Cytoplasmic-facing. In terms of domain architecture, Protein kinase spans 357–637 (FSSENELGRG…SLMLNSYSFT (281 aa)). Residues 363–371 (LGRGGFGSV) and Lys-385 contribute to the ATP site. Tyr-430 carries the phosphotyrosine modification. Asp-482 acts as the Proton acceptor in catalysis. The residue at position 486 (Ser-486) is a Phosphoserine. At Thr-524 the chain carries Phosphothreonine. Tyr-532 carries the post-translational modification Phosphotyrosine. Positions 659-679 (SSTEGLQMSSNDVTVSEFSPR) are disordered.

The protein belongs to the protein kinase superfamily. Ser/Thr protein kinase family. CRK subfamily.

The protein resides in the membrane. The catalysed reaction is L-seryl-[protein] + ATP = O-phospho-L-seryl-[protein] + ADP + H(+). It catalyses the reaction L-threonyl-[protein] + ATP = O-phospho-L-threonyl-[protein] + ADP + H(+). This is Cysteine-rich receptor-like protein kinase 29 (CRK29) from Arabidopsis thaliana (Mouse-ear cress).